Here is a 263-residue protein sequence, read N- to C-terminus: Transmembrane protein 176B (263 aa).

The next 4 helical transmembrane spans lie at 61–81 (LGVTQILLGLVSCVLGVCLYF), 89–109 (ASGCAFWSGSVAILAGVGIVI), 125–145 (LLLACSATAAAATVMGVKSLI), and 197–217 (LFLAFCILFTVICILKIVVSV). Residues 242-263 (KKLLGGDSAPASPTKEKIPVTP) form a disordered region. Residues Ser249 and Ser253 each carry the phosphoserine modification.

The protein belongs to the TMEM176 family. As to expression, expressed in spleen by a variety of myeloid cells including macrophages and dendritic cells (at protein level). Ubiquitously expressed with higher expression in lymphoid tissues.

Its subcellular location is the nucleus membrane. Its function is as follows. Required for the development of cerebellar granule cells. May play a role in the process of maturation of dendritic cells. The chain is Transmembrane protein 176B (Tmem176b) from Rattus norvegicus (Rat).